We begin with the raw amino-acid sequence, 166 residues long: C-signal (166 aa).

The mature C-signal (p17) is derived from the precursor sequence (p25) by proteolytic cleavage. The subtilisin-like protease PopC is directly responsible for cleavage of p25 to p17. The cleavage site is probably located between amino acid residues 60 and 68 in p25.

The protein localises to the secreted. It localises to the cell outer membrane. Synthesized as a precursor protein (p25), which is cleaved after secretion to generate the mature active C-signal (p17). The p25 precursor purified from M.xanthus cells does not display C-signal activity. In terms of biological role, cell-cell signaling protein required for fruiting body formation, a multicellular developmental program that is induced in response to starvation. Necessary for rippling, cellular aggregation, spore differentiation and for gene expression that is initiated after 6 hours of starvation. In starving cells, the C-signal directly induces aggregation and sporulation, which are induced at distinct threshold levels of C-signaling. Contact with C-signaling induces cells to glide with high speed and low stop and reversal frequencies toward aggregation centers. The C-signal acts as a morphogen and induces distinct events at distinct threshold levels. A regulated increase in the level of C-signaling during development ensures the correct temporal order of aggregation and sporulation. The protein is C-signal of Myxococcus xanthus.